A 764-amino-acid chain; its full sequence is Cyclin-F (764 aa).

Positions 19–27 (RKRVRKRAS) match the Nuclear localization signal 1 motif. One can recognise an F-box domain in the interval 28-75 (AVSLLSLPEELLVFVLQCLSAEDLLSVRAVHSHLCDIIDTNASIWARV). In terms of domain architecture, Cyclin N-terminal spans 307 to 404 (TKRYILVDWL…EVISVLDGKI (98 aa)). Residues 309–312 (RYIL) carry the D box 1 motif. Positions 570 to 575 (SSKRRR) match the Nuclear localization signal 2 motif. The PEST stretch occupies residues 583-738 (RGAFVATPTA…PSQRIRRQVK (156 aa)). Residues 662–754 (CEEDEQEPPT…HSAGEAEQED (93 aa)) form a disordered region. The span at 682 to 692 (SSSSTSSSSSS) shows a compositional bias: low complexity. Residues 702–722 (SGYSSIQSFPSPTGSSALVSP) are compositionally biased toward polar residues. The span at 732-742 (RIRRQVKRKNT) shows a compositional bias: basic residues.

It belongs to the cyclin family. Cyclin AB subfamily. In terms of assembly, component of the SCF(CCNF) complex. Expressed in the brain.

The protein localises to the nucleus. It localises to the cytoplasm. The protein resides in the perinuclear region. It is found in the cytoskeleton. Its subcellular location is the microtubule organizing center. The protein localises to the centrosome. It localises to the centriole. Its function is as follows. Substrate recognition component of a SCF (SKP1-CUL1-F-box protein) E3 ubiquitin-protein ligase complex which mediates the ubiquitination and subsequent proteasomal degradation of target proteins. The SCF(CCNF) E3 ubiquitin-protein ligase complex is an integral component of the ubiquitin proteasome system (UPS) and links proteasome degradation to the cell cycle. Mediates the substrate recognition and the proteasomal degradation of various target proteins during G2 phase involved in the regulation of cell cycle progression and in the maintenance of genome stability. May play a role in motor neuron development and axonal outgrowth. The sequence is that of Cyclin-F (ccnf) from Danio rerio (Zebrafish).